The primary structure comprises 1257 residues: Phosphatidylinositol 3,4,5-trisphosphate 5-phosphatase 2 (1257 aa).

The 97-residue stretch at 21–117 folds into the SH2 domain; the sequence is WYHRDLSRAA…GLVCALLLPV (97 aa). The segment covering 119–132 has biased composition (basic and acidic residues); sequence GEREPDPPDDRDAS. The interval 119-181 is disordered; sequence GEREPDPPDD…ESTPNGLSTV (63 aa). Phosphoserine is present on Ser-132. Residues 156-166 are compositionally biased toward pro residues; it reads PSSPLPTPETP. A Phosphothreonine modification is found at Thr-165. A phosphoserine mark is found at Ser-241 and Ser-353. Position 887 is a phosphotyrosine (Tyr-887). Ser-891 carries the phosphoserine modification. The disordered stretch occupies residues 897–986; sequence TGAKSKVPSV…PPKNSFNNPA (90 aa). The span at 939–951 shows a compositional bias: pro residues; it reads PPPTGRPPAPPRA. The SH3-binding motif lies at 945-950; the sequence is PPAPPR. Residues 952–966 are compositionally biased toward basic and acidic residues; it reads VPREEPLNPRLKSEG. The NPXY motif signature appears at 984–987; it reads NPAY. A Phosphotyrosine modification is found at Tyr-987. The segment covering 999–1008 has biased composition (low complexity); that stretch reads PLEPPSLARA. Positions 999–1119 are disordered; the sequence is PLEPPSLARA…FLGEVASGDD (121 aa). 2 stretches are compositionally biased toward pro residues: residues 1049–1060 and 1088–1104; these read LPPPDFPPPPLP and GPPP…PPGT. Ser-1132 bears the Phosphoserine mark. A disordered region spans residues 1134-1196; sequence VDYAPGPGRS…PQGGRASGLG (63 aa). 2 positions are modified to phosphotyrosine: Tyr-1136 and Tyr-1161. Residues 1195–1257 enclose the SAM domain; sequence LGEAGMGAWL…LLLDTLQLSK (63 aa). Ser-1256 bears the Phosphoserine mark.

Belongs to the inositol 1,4,5-trisphosphate 5-phosphatase family. In terms of assembly, interacts with tyrosine phosphorylated form of SHC1. Interacts with EGFR. Upon stimulation by the EGF signaling pathway, it forms a complex with SHC1 and EGFR. Interacts with cytoskeletal protein SORBS3/vinexin, promoting its localization to the periphery of cells. Forms a complex with filamin (FLNA or FLNB), actin, GPIb (GP1BA or GP1BB) that regulates cortical and submembraneous actin. Interacts with c-Met/MET, when c-Met/MET is phosphorylated on 'Tyr-1356'. Interacts with p130Cas/BCAR1. Interacts with CENTD3/ARAP3 via its SAM domain. Interacts with c-Cbl/CBL and CAP/SORBS1. Interacts with activated EPHA2 receptor. Interacts with receptors FCGR2A. Interacts with FCGR2B. Interacts with tyrosine kinase ABL1. Interacts with tyrosine kinase TEC. Interacts with CSF1R. Interacts (via N-terminus) with SH3YL1 (via SH3 domain). Interacts (via SH2 domain) with tyrosine phosphorylated KLRC1 (via ITIM). Interacts with NEDD9/HEF1. In terms of processing, tyrosine phosphorylated by the members of the SRC family after exposure to a diverse array of extracellular stimuli such as insulin, growth factors such as EGF or PDGF, chemokines, integrin ligands and hypertonic and oxidative stress. May be phosphorylated upon IgG receptor FCGR2B-binding. Phosphorylated at Tyr-987 following cell attachment and spreading. Phosphorylated at Tyr-1161 following EGF signaling pathway stimulation. Widely expressed.

Its subcellular location is the cytoplasm. It is found in the cytosol. It localises to the cytoskeleton. The protein resides in the membrane. The protein localises to the cell projection. Its subcellular location is the filopodium. It is found in the lamellipodium. It localises to the basal cell membrane. The protein resides in the nucleus. The protein localises to the nucleus speckle. Its subcellular location is the spindle pole. The enzyme catalyses a 1,2-diacyl-sn-glycero-3-phospho-(1D-myo-inositol-3,4,5-trisphosphate) + H2O = a 1,2-diacyl-sn-glycero-3-phospho-(1D-myo-inositol-3,4-bisphosphate) + phosphate. The catalysed reaction is 1,2-dioctanoyl-sn-glycero-3-phospho-(1D-myo-inositol-3,4,5-trisphosphate) + H2O = 1,2-dioctanoyl-sn-glycero-3-phospho-(1D-myo-inositol-3,4-bisphosphate) + phosphate. It catalyses the reaction 1,2-dihexadecanoyl-sn-glycero-3-phospho-(1D-myo-inositol-3,4,5-trisphosphate) + H2O = 1,2-dihexadecanoyl-sn-glycero-3-phospho-(1D-myo-inositol-3,4-bisphosphate) + phosphate. Its activity is regulated as follows. Activated upon translocation to the sites of synthesis of PtdIns(3,4,5)P3 in the membrane. Enzymatic activity is enhanced in the presence of phosphatidylserine. Phosphatidylinositol (PtdIns) phosphatase that specifically hydrolyzes the 5-phosphate of phosphatidylinositol-3,4,5-trisphosphate (PtdIns(3,4,5)P3) to produce PtdIns(3,4)P2, thereby negatively regulating the PI3K (phosphoinositide 3-kinase) pathways. Required for correct mitotic spindle orientation and therefore progression of mitosis. Plays a central role in regulation of PI3K-dependent insulin signaling, although the precise molecular mechanisms and signaling pathways remain unclear. While overexpression reduces both insulin-stimulated MAP kinase and Akt activation, its absence does not affect insulin signaling or GLUT4 trafficking. Confers resistance to dietary obesity. May act by regulating AKT2, but not AKT1, phosphorylation at the plasma membrane. Part of a signaling pathway that regulates actin cytoskeleton remodeling. Required for the maintenance and dynamic remodeling of actin structures as well as in endocytosis, having a major impact on ligand-induced EGFR internalization and degradation. Participates in regulation of cortical and submembraneous actin by hydrolyzing PtdIns(3,4,5)P3 thereby regulating membrane ruffling. Regulates cell adhesion and cell spreading. Required for HGF-mediated lamellipodium formation, cell scattering and spreading. Acts as a negative regulator of EPHA2 receptor endocytosis by inhibiting via PI3K-dependent Rac1 activation. Acts as a regulator of neuritogenesis by regulating PtdIns(3,4,5)P3 level and is required to form an initial protrusive pattern, and later, maintain proper neurite outgrowth. Acts as a negative regulator of the FC-gamma-RIIA receptor (FCGR2A). Mediates signaling from the FC-gamma-RIIB receptor (FCGR2B), playing a central role in terminating signal transduction from activating immune/hematopoietic cell receptor systems. Upon stimulation by EGF, it is recruited by EGFR and dephosphorylates PtdIns(3,4,5)P3. Plays a negative role in regulating the PI3K-PKB pathway, possibly by inhibiting PKB activity. Down-regulates Fc-gamma-R-mediated phagocytosis in macrophages independently of INPP5D/SHIP1. In macrophages, down-regulates NF-kappa-B-dependent gene transcription by regulating macrophage colony-stimulating factor (M-CSF)-induced signaling. Plays a role in the localization of AURKA and NEDD9/HEF1 to the basolateral membrane at interphase in polarized cysts, thereby mediates cell cycle homeostasis, cell polarization and cilia assembly. Additionally promotion of cilia growth is also facilitated by hydrolysis of (PtdIns(3,4,5)P3) to PtdIns(3,4)P2. Promotes formation of apical membrane-initiation sites during the initial stages of lumen formation via Rho family-induced actin filament organization and CTNNB1 localization to cell-cell contacts. May also hydrolyze PtdIns(1,3,4,5)P4, and could thus affect the levels of the higher inositol polyphosphates like InsP6. Involved in endochondral ossification. The sequence is that of Phosphatidylinositol 3,4,5-trisphosphate 5-phosphatase 2 from Mus musculus (Mouse).